The sequence spans 321 residues: Small ribosomal subunit protein mS43 (321 aa).

Residues 1 to 13 (MLRFTGARAIRKY) constitute a mitochondrion transit peptide.

Belongs to the mitochondrion-specific ribosomal protein mS43 family. In terms of assembly, component of the mitochondrial small ribosomal subunit (mt-SSU). Mature yeast 74S mitochondrial ribosomes consist of a small (37S) and a large (54S) subunit. The 37S small subunit contains a 15S ribosomal RNA (15S mt-rRNA) and 34 different proteins. The 54S large subunit contains a 21S rRNA (21S mt-rRNA) and 46 different proteins. mS43 forms a heterodimer with mS42, building a large protuberance adjacent to the mRNA channel exit in the mt-SSU body.

It localises to the mitochondrion. Functionally, component of the mitochondrial ribosome (mitoribosome), a dedicated translation machinery responsible for the synthesis of mitochondrial genome-encoded proteins, including at least some of the essential transmembrane subunits of the mitochondrial respiratory chain. The mitoribosomes are attached to the mitochondrial inner membrane and translation products are cotranslationally integrated into the membrane. This Saccharomyces cerevisiae (strain ATCC 204508 / S288c) (Baker's yeast) protein is Small ribosomal subunit protein mS43 (MRP1).